The chain runs to 545 residues: ATP synthase subunit alpha (545 aa).

An ATP-binding site is contributed by 172 to 179; the sequence is GDRKTGKT.

Belongs to the ATPase alpha/beta chains family. As to quaternary structure, F-type ATPases have 2 components, CF(1) - the catalytic core - and CF(0) - the membrane proton channel. CF(1) has five subunits: alpha(3), beta(3), gamma(1), delta(1), epsilon(1). CF(0) has three main subunits: a(1), b(2) and c(9-12). The alpha and beta chains form an alternating ring which encloses part of the gamma chain. CF(1) is attached to CF(0) by a central stalk formed by the gamma and epsilon chains, while a peripheral stalk is formed by the delta and b chains.

Its subcellular location is the cell membrane. The catalysed reaction is ATP + H2O + 4 H(+)(in) = ADP + phosphate + 5 H(+)(out). Functionally, produces ATP from ADP in the presence of a proton gradient across the membrane. The alpha chain is a regulatory subunit. This is ATP synthase subunit alpha from Nocardia farcinica (strain IFM 10152).